The chain runs to 551 residues: Glucans biosynthesis protein D (551 aa).

A signal peptide (tat-type signal) is located at residues 1-32 (MDRRRFIKGSMAMAAVCGTSGIASLFSQAAFA).

The protein belongs to the OpgD/OpgG family. Predicted to be exported by the Tat system. The position of the signal peptide cleavage has not been experimentally proven.

The protein resides in the periplasm. It functions in the pathway glycan metabolism; osmoregulated periplasmic glucan (OPG) biosynthesis. Functionally, probably involved in the control of the structural glucose backbone of osmoregulated periplasmic glucans (OPGs). The chain is Glucans biosynthesis protein D from Shigella dysenteriae serotype 1 (strain Sd197).